A 190-amino-acid polypeptide reads, in one-letter code: Probable GTP-binding protein EngB (190 aa).

Residues 22–190 (VKREVAFAGR…LNELLKILIP (169 aa)) enclose the EngB-type G domain. Residues 30–37 (GRSNVGKS), 56–60 (GKTRS), 74–77 (DLPG), 141–144 (TKTD), and 173–175 (FSA) contribute to the GTP site. Serine 37 and threonine 58 together coordinate Mg(2+).

The protein belongs to the TRAFAC class TrmE-Era-EngA-EngB-Septin-like GTPase superfamily. EngB GTPase family. Mg(2+) is required as a cofactor.

Necessary for normal cell division and for the maintenance of normal septation. The polypeptide is Probable GTP-binding protein EngB (Kosmotoga olearia (strain ATCC BAA-1733 / DSM 21960 / TBF 19.5.1)).